The sequence spans 384 residues: N-acetyldiaminopimelate deacetylase (384 aa).

Residue aspartate 74 is part of the active site. Residue glutamate 133 is the Proton acceptor of the active site.

The protein belongs to the peptidase M20A family. N-acetyldiaminopimelate deacetylase subfamily.

The catalysed reaction is N-acetyl-(2S,6S)-2,6-diaminopimelate + H2O = (2S,6S)-2,6-diaminopimelate + acetate. It functions in the pathway amino-acid biosynthesis; L-lysine biosynthesis via DAP pathway; LL-2,6-diaminopimelate from (S)-tetrahydrodipicolinate (acetylase route): step 3/3. Functionally, catalyzes the conversion of N-acetyl-diaminopimelate to diaminopimelate and acetate. In Leuconostoc mesenteroides subsp. mesenteroides (strain ATCC 8293 / DSM 20343 / BCRC 11652 / CCM 1803 / JCM 6124 / NCDO 523 / NBRC 100496 / NCIMB 8023 / NCTC 12954 / NRRL B-1118 / 37Y), this protein is N-acetyldiaminopimelate deacetylase.